Consider the following 146-residue polypeptide: Large ribosomal subunit protein uL15 (146 aa).

The segment at 1–56 (MKLHELKAAEGANKASKRVGRGTGSGLGKTSGRGQNGQNSRSGGGVRPGFEGGQMP) is disordered. Composition is skewed to gly residues over residues 21-35 (RGTG…GRGQ) and 42-52 (SGGGVRPGFEG).

Belongs to the universal ribosomal protein uL15 family. In terms of assembly, part of the 50S ribosomal subunit.

Its function is as follows. Binds to the 23S rRNA. This Clostridium botulinum (strain ATCC 19397 / Type A) protein is Large ribosomal subunit protein uL15.